Consider the following 166-residue polypeptide: Urease accessory protein UreE 2 (166 aa).

A disordered region spans residues 135-154 (EHGAYGGGHHHSRAGEEDFN).

The protein belongs to the UreE family.

It localises to the cytoplasm. In terms of biological role, involved in urease metallocenter assembly. Binds nickel. Probably functions as a nickel donor during metallocenter assembly. This Pseudomonas syringae pv. syringae (strain B728a) protein is Urease accessory protein UreE 2.